A 404-amino-acid chain; its full sequence is WD repeat and SOCS box-containing protein 2 (404 aa).

WD repeat units lie at residues 16–55 (GRPH…LIPW), 81–140 (GSPK…IWEV), 144–183 (LLLL…IWDL), 188–226 (KQIQ…LWSM), 230–268 (TLIR…MWDP), 283–322 (DPAM…IWAL), and 325–362 (KTPI…FWTA). Residues 68–87 (AKSRSSKNETKGRGSPKEKT) are disordered. The SOCS box domain occupies 356 to 404 (HVQFWTAPRVLSSLKHLCRKALRSFLTTYQVLALPIPKKMKEFLTYRTF).

It participates in protein modification; protein ubiquitination. Its function is as follows. May be a substrate-recognition component of a SCF-like ECS (Elongin-Cullin-SOCS-box protein) E3 ubiquitin ligase complex which mediates the ubiquitination and subsequent proteasomal degradation of target proteins. The sequence is that of WD repeat and SOCS box-containing protein 2 (WSB2) from Homo sapiens (Human).